The primary structure comprises 1316 residues: DNA-directed RNA polymerase subunit beta' (1316 aa).

4 residues coordinate Zn(2+): cysteine 60, cysteine 62, cysteine 75, and cysteine 78. Mg(2+) contacts are provided by aspartate 535, aspartate 537, and aspartate 539. Positions 891, 968, 975, and 978 each coordinate Zn(2+).

Belongs to the RNA polymerase beta' chain family. The RNAP catalytic core consists of 2 alpha, 1 beta, 1 beta' and 1 omega subunit. When a sigma factor is associated with the core the holoenzyme is formed, which can initiate transcription. It depends on Mg(2+) as a cofactor. The cofactor is Zn(2+).

It carries out the reaction RNA(n) + a ribonucleoside 5'-triphosphate = RNA(n+1) + diphosphate. DNA-dependent RNA polymerase catalyzes the transcription of DNA into RNA using the four ribonucleoside triphosphates as substrates. This is DNA-directed RNA polymerase subunit beta' from Mycobacterium tuberculosis (strain ATCC 25177 / H37Ra).